The primary structure comprises 511 residues: uncharacterized protein (511 aa).

Transmembrane regions (helical) follow at residues 33–53, 59–79, and 97–117; these read IICM…LAMA, IPVQ…AHIS, and VGRF…TTSI. Phosphoserine is present on residues S147, S161, and S162. Positions 157 to 180 are disordered; the sequence is REGNSSDEYLPPQSSRRDVSSEKP. The next 7 helical transmembrane spans lie at 216-236, 249-269, 297-317, 332-352, 412-432, 449-469, and 483-503; these read LWLY…AGIF, IKGA…LGAF, MVES…EHLG, SLAF…SKVV, VLWG…YIML, IITS…SYDV, and IMNI…MFLI.

It to yeast YCR061W.

The protein resides in the endoplasmic reticulum membrane. This is an uncharacterized protein from Schizosaccharomyces pombe (strain 972 / ATCC 24843) (Fission yeast).